The chain runs to 42 residues: Kappa-actitoxin-Ael2a (42 aa).

Cystine bridges form between cysteine 4–cysteine 37, cysteine 6–cysteine 30, and cysteine 20–cysteine 38.

The protein belongs to the sea anemone type 3 (BDS) potassium channel toxin family.

The protein localises to the secreted. It is found in the nematocyst. Functionally, peptide with both antimicrobial and neurotoxin activities. This toxin acts both on ERG potassium channels and sodium channels. It potently and reversibly inhibits human Kv11.1/KCNH2/ERG1 (IC(50)=34 nM), rat Kv11.1/KCNH2/ERG1 and Kv11.3/KCNH7/ERG3 voltage-gated potassium channels in a similar potency. It acts as a gating-modifier toxin that shifts the voltage-dependence of ERG activation in the positive direction and suppresses its current amplitudes elicited by strong depolarizing pulses. On sodium channels, it blocks Nav1.2/SCN2A (EC(50)=31 nM), Nav1.3/SCN3A, Nav1.4/SCN4A, Nav1.5/SCN5A, Nav1.6/SCN8A, Nav1.8/SCN10A (EC(50)=92 nM). It may act by binding at site 1 or close by, only when the pore is in an open configuration. Shows antibacterial activity against the Gram-negative bacterium S.typhimurium, but not on the bacteria B.subtilis, S.aureus, and P.aeruginosa. In vivo, this toxin does not induce neurotoxic symptoms when injected into mice. This is Kappa-actitoxin-Ael2a from Anthopleura elegantissima (Green aggregating anemone).